Reading from the N-terminus, the 198-residue chain is Synaptobrevin homolog YKT6-A (198 aa).

The 120-residue stretch at 8-127 (VLYKGENKVH…IQYNALDSYL (120 aa)) folds into the Longin domain. A v-SNARE coiled-coil homology domain is found at 138–198 (PMSKVQAELD…RKQNSCCDIM (61 aa)). The S-palmitoyl cysteine moiety is linked to residue cysteine 194. A Cysteine methyl ester modification is found at cysteine 195. Cysteine 195 carries S-farnesyl cysteine lipidation. A propeptide spans 196 to 198 (DIM) (removed in mature form).

Belongs to the synaptobrevin family. Palmitoylated; catalyzes its own palmitoylation. Palmitoylation is required for Golgi targeting. Post-translationally, farnesylation is required for Golgi targeting.

It localises to the cytoplasm. The protein localises to the cytosol. It is found in the cytoplasmic vesicle membrane. The protein resides in the golgi apparatus membrane. In terms of biological role, vesicular soluble NSF attachment protein receptor (v-SNARE) mediating vesicle docking and fusion to a specific acceptor cellular compartment. Functions in endoplasmic reticulum to Golgi transport; as part of a SNARE complex composed of GOSR1, GOSR2 and STX5. Functions in early/recycling endosome to TGN transport; as part of a SNARE complex composed of BET1L, GOSR1 and STX5. Has a S-palmitoyl transferase activity. The sequence is that of Synaptobrevin homolog YKT6-A (ykt6-a) from Xenopus laevis (African clawed frog).